Reading from the N-terminus, the 172-residue chain is Probable metallophosphoesterase MTH_1774 (172 aa).

7 residues coordinate a divalent metal cation: Asp-8, His-10, Asp-37, Asn-59, His-85, His-113, and His-115.

It belongs to the metallophosphoesterase superfamily. YfcE family. Requires a divalent metal cation as cofactor.

This is Probable metallophosphoesterase MTH_1774 from Methanothermobacter thermautotrophicus (strain ATCC 29096 / DSM 1053 / JCM 10044 / NBRC 100330 / Delta H) (Methanobacterium thermoautotrophicum).